The sequence spans 214 residues: Transmembrane emp24 domain-containing protein p24delta9 (214 aa).

The N-terminal stretch at 1–24 (MFLRSLNLCTILLFLAISSQVSQS) is a signal peptide. At 25-181 (LHFELQSGRT…QNLNRATNSK (157 aa)) the chain is on the lumenal side. Residues 34–149 (TKCISEDIKS…VEVMEFDVKR (116 aa)) enclose the GOLD domain. The stretch at 164 to 177 (LREREEEMQNLNRA) forms a coiled coil. The residue at position 167 (Arg167) is an Omega-N-methylated arginine. A helical transmembrane segment spans residues 182–202 (MAWLSFLSLFVCLGVAGMQFV). At 203 to 214 (HLKTFFEKKKVI) the chain is on the cytoplasmic side. The COPII vesicle coat-binding signature appears at 207-208 (FF). The short motif at 207-214 (FFEKKKVI) is the COPI vesicle coat-binding element.

Belongs to the EMP24/GP25L family. Probably oligomerizes with other members of the EMP24/GP25L family. Associates with the COPI vesicle coat (coatomer). Associates with the COPII vesicle coat (coatomer).

It localises to the endoplasmic reticulum membrane. It is found in the golgi apparatus. The protein resides in the cis-Golgi network membrane. Its subcellular location is the golgi stack membrane. In terms of biological role, involved in vesicular protein trafficking. Mainly functions in the early secretory pathway. Thought to act as cargo receptor at the lumenal side for incorporation of secretory cargo molecules into transport vesicles and to be involved in vesicle coat formation at the cytoplasmic side. In Arabidopsis thaliana (Mouse-ear cress), this protein is Transmembrane emp24 domain-containing protein p24delta9.